The primary structure comprises 239 residues: tRNA (guanine-N(7)-)-methyltransferase (239 aa).

S-adenosyl-L-methionine is bound by residues E68, E93, D120, and D143. The active site involves D143. Residues K147, D180, and 217–220 (TKFE) contribute to the substrate site.

This sequence belongs to the class I-like SAM-binding methyltransferase superfamily. TrmB family.

It catalyses the reaction guanosine(46) in tRNA + S-adenosyl-L-methionine = N(7)-methylguanosine(46) in tRNA + S-adenosyl-L-homocysteine. The protein operates within tRNA modification; N(7)-methylguanine-tRNA biosynthesis. Catalyzes the formation of N(7)-methylguanine at position 46 (m7G46) in tRNA. This is tRNA (guanine-N(7)-)-methyltransferase from Vibrio vulnificus (strain CMCP6).